We begin with the raw amino-acid sequence, 246 residues long: MTNNAAAPLYSLRGLPLIGWRDMPHALNYLFADGQLKQGTLVAINAEKLLTAEDNPDVRALIAAAEFKYADGISVVRSIRKKFPQAQVSRVAGADLWEALMARAGKEGTPVFLIGGKPEVLAQTEEKLRAQWNVNIVGSQDGYFTPEQSQALFARIHASGAQIVTVAMGSPKQEIVMHDCREVHPHALYMGVGGTYDVFTGHVKRAPKIWQNLGLEWLYRLLSQPSRITRQMRLLRYLRWHYTDDL.

Belongs to the glycosyltransferase 26 family.

It catalyses the reaction UDP-N-acetyl-alpha-D-mannosaminouronate + N-acetyl-alpha-D-glucosaminyl-di-trans,octa-cis-undecaprenyl diphosphate = beta-D-ManNAcA-(1-&gt;4)-alpha-D-GlcNAc-di-trans,octa-cis-undecaprenyl diphosphate + UDP + H(+). Its pathway is bacterial outer membrane biogenesis; enterobacterial common antigen biosynthesis. In terms of biological role, catalyzes the synthesis of Und-PP-GlcNAc-ManNAcA (Lipid II), the second lipid-linked intermediate involved in enterobacterial common antigen (ECA) synthesis. The protein is UDP-N-acetyl-D-mannosaminuronic acid transferase of Salmonella arizonae (strain ATCC BAA-731 / CDC346-86 / RSK2980).